We begin with the raw amino-acid sequence, 174 residues long: Crossover junction endodeoxyribonuclease RuvC (174 aa).

Residues Asp8, Glu67, and Asp139 contribute to the active site. Mg(2+) is bound by residues Asp8, Glu67, and Asp139.

Belongs to the RuvC family. Homodimer which binds Holliday junction (HJ) DNA. The HJ becomes 2-fold symmetrical on binding to RuvC with unstacked arms; it has a different conformation from HJ DNA in complex with RuvA. In the full resolvosome a probable DNA-RuvA(4)-RuvB(12)-RuvC(2) complex forms which resolves the HJ. The cofactor is Mg(2+).

It is found in the cytoplasm. It carries out the reaction Endonucleolytic cleavage at a junction such as a reciprocal single-stranded crossover between two homologous DNA duplexes (Holliday junction).. The RuvA-RuvB-RuvC complex processes Holliday junction (HJ) DNA during genetic recombination and DNA repair. Endonuclease that resolves HJ intermediates. Cleaves cruciform DNA by making single-stranded nicks across the HJ at symmetrical positions within the homologous arms, yielding a 5'-phosphate and a 3'-hydroxyl group; requires a central core of homology in the junction. The consensus cleavage sequence is 5'-(A/T)TT(C/G)-3'. Cleavage occurs on the 3'-side of the TT dinucleotide at the point of strand exchange. HJ branch migration catalyzed by RuvA-RuvB allows RuvC to scan DNA until it finds its consensus sequence, where it cleaves and resolves the cruciform DNA. This is Crossover junction endodeoxyribonuclease RuvC from Pseudomonas savastanoi pv. phaseolicola (strain 1448A / Race 6) (Pseudomonas syringae pv. phaseolicola (strain 1448A / Race 6)).